We begin with the raw amino-acid sequence, 404 residues long: Argininosuccinate synthase (404 aa).

An ATP-binding site is contributed by alanine 9 to serine 17. Residue tyrosine 86 coordinates L-citrulline. Glycine 116 serves as a coordination point for ATP. L-aspartate contacts are provided by threonine 118, asparagine 122, and aspartate 123. Asparagine 122 serves as a coordination point for L-citrulline. 5 residues coordinate L-citrulline: arginine 126, serine 174, serine 183, glutamate 259, and tyrosine 271.

This sequence belongs to the argininosuccinate synthase family. Type 1 subfamily. In terms of assembly, homotetramer.

The protein localises to the cytoplasm. The enzyme catalyses L-citrulline + L-aspartate + ATP = 2-(N(omega)-L-arginino)succinate + AMP + diphosphate + H(+). The protein operates within amino-acid biosynthesis; L-arginine biosynthesis; L-arginine from L-ornithine and carbamoyl phosphate: step 2/3. The sequence is that of Argininosuccinate synthase from Listeria monocytogenes serovar 1/2a (strain ATCC BAA-679 / EGD-e).